The chain runs to 326 residues: Probable oxidoreductase patJ (326 aa).

The disordered stretch occupies residues His287–Lys326. Over residues Gly292–Val304 the composition is skewed to polar residues.

It belongs to the oxidoreductase OpS7 family.

Its subcellular location is the vacuole lumen. The protein resides in the cytoplasmic vesicle lumen. It functions in the pathway mycotoxin biosynthesis; patulin biosynthesis. Functionally, probable oxidoreductase; part of the gene cluster that mediates the biosynthesis of patulin, an acetate-derived tetraketide mycotoxin produced by several fungal species that shows antimicrobial properties against several bacteria. PatJ acts with patO in the vacuole to convert gentisyl alcohol to isoepoxydon. The pathway begins with the synthesis of 6-methylsalicylic acid by the polyketide synthase (PKS) patK via condensation of acetate and malonate units. The 6-methylsalicylic acid decarboxylase patG then catalyzes the decarboxylation of 6-methylsalicylic acid to yield m-cresol (also known as 3-methylphenol). These first reactions occur in the cytosol. The intermediate m-cresol is then transported into the endoplasmic reticulum where the cytochrome P450 monooxygenase patH converts it to m-hydroxybenzyl alcohol, which is further converted to gentisyl alcohol by the cytochrome P450 monooxygenase patI. The oxidoreductases patJ and patO further convert gentisyl alcohol to isoepoxydon in the vacuole. PatN catalyzes then the transformation of isoepoxydon into phyllostine. The cluster protein patF is responsible for the conversion from phyllostine to neopatulin whereas the alcohol dehydrogenase patD converts neopatulin to E-ascladiol. The steps between isoepoxydon and E-ascladiol occur in the cytosol, and E-ascladiol is probably secreted to the extracellular space by one of the cluster-specific transporters patC or patM. Finally, the secreted patulin synthase patE catalyzes the conversion of E-ascladiol to patulin. The protein is Probable oxidoreductase patJ of Penicillium expansum (Blue mold rot fungus).